The sequence spans 630 residues: 1-deoxy-D-xylulose-5-phosphate synthase (630 aa).

Residues His-72 and 113–115 (GHS) each bind thiamine diphosphate. Asp-144 provides a ligand contact to Mg(2+). Thiamine diphosphate is bound by residues 145–146 (GA), Asn-173, Tyr-284, and Glu-367. Asn-173 contacts Mg(2+).

This sequence belongs to the transketolase family. DXPS subfamily. Homodimer. It depends on Mg(2+) as a cofactor. Thiamine diphosphate is required as a cofactor.

It catalyses the reaction D-glyceraldehyde 3-phosphate + pyruvate + H(+) = 1-deoxy-D-xylulose 5-phosphate + CO2. It participates in metabolic intermediate biosynthesis; 1-deoxy-D-xylulose 5-phosphate biosynthesis; 1-deoxy-D-xylulose 5-phosphate from D-glyceraldehyde 3-phosphate and pyruvate: step 1/1. Catalyzes the acyloin condensation reaction between C atoms 2 and 3 of pyruvate and glyceraldehyde 3-phosphate to yield 1-deoxy-D-xylulose-5-phosphate (DXP). The chain is 1-deoxy-D-xylulose-5-phosphate synthase from Geobacillus thermodenitrificans (strain NG80-2).